The sequence spans 399 residues: Serine/threonine-protein kinase PknL (399 aa).

The Cytoplasmic portion of the chain corresponds to 1-368; it reads MVEAGTRDPL…FIWARQHARR (368 aa). The region spanning 19–278 is the Protein kinase domain; that stretch reads YLVQAKIASG…IAMGADLEAI (260 aa). ATP-binding positions include 25–33 and K48; that span reads IASGGTSTV. The Proton acceptor role is filled by D142. Residues 312–346 are disordered; sequence GQLGAKPVHHPTRQLTRQPGDCSEPASGSEPEHEP. A helical membrane pass occupies residues 369 to 389; it reads MVLVWVSVVLAITGLVASAAW. Topologically, residues 390–399 are extracellular; that stretch reads TIGSNLSGLL.

This sequence belongs to the protein kinase superfamily. Ser/Thr protein kinase family. Autophosphorylated.

It is found in the cell membrane. The enzyme catalyses L-seryl-[protein] + ATP = O-phospho-L-seryl-[protein] + ADP + H(+). The catalysed reaction is L-threonyl-[protein] + ATP = O-phospho-L-threonyl-[protein] + ADP + H(+). This is Serine/threonine-protein kinase PknL (pknL) from Mycobacterium bovis (strain ATCC BAA-935 / AF2122/97).